The primary structure comprises 399 residues: 3-sulfinopropanoyl-CoA desulfinase (399 aa).

FAD is bound by residues 121–124 (ICIS), serine 130, and 153–156 (YWIT). 244-245 (YN) is a substrate binding site. FAD contacts are provided by residues arginine 273, glutamine 340, serine 344, 367–371 (GGTAQ), and glutamine 388.

The protein belongs to the acyl-CoA dehydrogenase family. Homotrimer or homotetramer. Requires FAD as cofactor.

It catalyses the reaction 3-sulfinopropanoyl-CoA + H2O = propanoyl-CoA + sulfite + H(+). Functionally, catalyzes the conversion 3-sulfinopropanoyl-CoA (3SP-CoA) to propanoyl-CoA by abstraction of sulfite. Does not show dehydrogenase activity. This Variovorax paradoxus protein is 3-sulfinopropanoyl-CoA desulfinase.